We begin with the raw amino-acid sequence, 78 residues long: Translational regulator CsrA (78 aa).

This sequence belongs to the CsrA/RsmA family. In terms of assembly, homodimer; the beta-strands of each monomer intercalate to form a hydrophobic core, while the alpha-helices form wings that extend away from the core.

The protein resides in the cytoplasm. A translational regulator that binds mRNA to regulate translation initiation and/or mRNA stability. Usually binds in the 5'-UTR at or near the Shine-Dalgarno sequence preventing ribosome-binding, thus repressing translation. Its main target seems to be the major flagellin gene, while its function is anatagonized by FliW. This chain is Translational regulator CsrA, found in Borrelia turicatae (strain 91E135).